Here is a 155-residue protein sequence, read N- to C-terminus: Small ribosomal subunit protein uS7cz/uS7cy (155 aa).

The protein belongs to the universal ribosomal protein uS7 family. In terms of assembly, part of the 30S ribosomal subunit.

The protein localises to the plastid. Its function is as follows. One of the primary rRNA binding proteins, it binds directly to 16S rRNA where it nucleates assembly of the head domain of the 30S subunit. This chain is Small ribosomal subunit protein uS7cz/uS7cy (rps7-A), found in Epifagus virginiana (Beechdrops).